The following is a 221-amino-acid chain: 2-amino-5-formylamino-6-ribosylaminopyrimidin-4(3H)-one 5'-monophosphate deformylase (221 aa).

Fe cation-binding residues include glutamate 29, histidine 31, aspartate 40, and histidine 108.

The protein belongs to the creatininase superfamily. FAPy deformylase family. Homodimer. Fe(2+) is required as a cofactor. It depends on Zn(2+) as a cofactor.

It carries out the reaction 2-amino-5-formylamino-6-(5-phospho-D-ribosylamino)pyrimidin-4(3H)-one + H2O = 2,5-diamino-6-(1-D-ribosylamino)pyrimidin-4(3H)-one 5'-phosphate + formate + H(+). The protein operates within cofactor biosynthesis; coenzyme F420 biosynthesis. It participates in cofactor biosynthesis; riboflavin biosynthesis. In terms of biological role, catalyzes the hydrolysis of the formamide of 2-amino-5-formylamino-6-ribosylamino-4(3H)-pyrimidinone 5'-monophosphate (FAPy) to form 2,5-diamino-6-ribosylamino-4(3H)-pyrimidinone 5'-phosphate (APy). The polypeptide is 2-amino-5-formylamino-6-ribosylaminopyrimidin-4(3H)-one 5'-monophosphate deformylase (Methanococcus maripaludis (strain C5 / ATCC BAA-1333)).